The primary structure comprises 488 residues: Ribulose bisphosphate carboxylase large chain (488 aa).

Positions 127 and 177 each coordinate substrate. Lys179 acts as the Proton acceptor in catalysis. A substrate-binding site is contributed by Lys181. Mg(2+)-binding residues include Lys205, Asp207, and Glu208. At Lys205 the chain carries N6-carboxylysine. Catalysis depends on His297, which acts as the Proton acceptor. Arg298, His330, and Ser382 together coordinate substrate.

This sequence belongs to the RuBisCO large chain family. Type I subfamily. As to quaternary structure, heterohexadecamer of 8 large chains and 8 small chains. Requires Mg(2+) as cofactor.

The protein resides in the plastid. The protein localises to the chloroplast. The catalysed reaction is 2 (2R)-3-phosphoglycerate + 2 H(+) = D-ribulose 1,5-bisphosphate + CO2 + H2O. The enzyme catalyses D-ribulose 1,5-bisphosphate + O2 = 2-phosphoglycolate + (2R)-3-phosphoglycerate + 2 H(+). RuBisCO catalyzes two reactions: the carboxylation of D-ribulose 1,5-bisphosphate, the primary event in carbon dioxide fixation, as well as the oxidative fragmentation of the pentose substrate in the photorespiration process. Both reactions occur simultaneously and in competition at the same active site. This chain is Ribulose bisphosphate carboxylase large chain, found in Rhodomonas salina (Cryptomonas salina).